A 295-amino-acid polypeptide reads, in one-letter code: MIKQYLQVTKPGIIFGNLISVIGGFLLASKGSIDYPLFLFTLVGVSLVVASGCVFNNYIDRDIDRKMERTKNRVLVKGLISPKMSLVYATLLGIAGFMLLWFGANPLAMWLAVMGFVVYVGVYSLYMKRHSVYGTLIGSLSGAAPPVIGYCAVTNEFDTGALILLAIFSLWQMPHSYAIAIFRFKDYQAANIPVLPVVKGISVAKNHITLYIIAFAVATLMLSLGGYAGYKYLVVAAAVSVWWLGMALRGYKAENDKVWARKLFVFSIVAITSLSVMMSVDFMVPDSHNLLTYVW.

9 helical membrane-spanning segments follow: residues 8–28, 35–55, 74–94, 106–125, 132–152, 162–182, 208–228, 233–253, and 264–284; these read VTKP…FLLA, YPLF…GCVF, VLVK…LLGI, PLAM…VYSL, VYGT…GYCA, LILL…IAIF, ITLY…GGYA, LVVA…GYKA, and FVFS…DFMV.

It belongs to the UbiA prenyltransferase family. Protoheme IX farnesyltransferase subfamily.

Its subcellular location is the cell inner membrane. It carries out the reaction heme b + (2E,6E)-farnesyl diphosphate + H2O = Fe(II)-heme o + diphosphate. The protein operates within porphyrin-containing compound metabolism; heme O biosynthesis; heme O from protoheme: step 1/1. In terms of biological role, converts heme B (protoheme IX) to heme O by substitution of the vinyl group on carbon 2 of heme B porphyrin ring with a hydroxyethyl farnesyl side group. In Cronobacter sakazakii (strain ATCC BAA-894) (Enterobacter sakazakii), this protein is Protoheme IX farnesyltransferase.